Reading from the N-terminus, the 119-residue chain is MGIVVKSFKDQFSSDERLKESNNIIAKYPDRIPVIIEKYSNADLPDMEKNKYLVPRDMTVGHFIHMLSKRMQLDPSKALFVFVHNTLPQTASRMDSLYNTFKEEDGFLYMCYSTEKTFG.

The Phosphatidylethanolamine amidated glycine moiety is linked to residue Gly119.

This sequence belongs to the ATG8 family. As to quaternary structure, interacts with ATG4. Interacts with ATI1. In terms of processing, gly-119 forms then a thioester bond with the 'Cys-558' of ATG7 (E1-like activating enzyme) before being transferred to the 'Cys-258' of ATG3 (the specific E2 conjugating enzyme), in order to be finally amidated with phosphatidylethanolamine. This lipid modification anchors ATG8 to autophagosomes. Constitutively expressed.

It localises to the cytoplasmic vesicle. The protein resides in the autophagosome membrane. It is found in the vacuole membrane. The protein localises to the cytoplasm. Its subcellular location is the cytoskeleton. Ubiquitin-like modifier involved in autophagosomes formation. May mediate the delivery of the autophagosomes to the vacuole via the microtubule cytoskeleton. The polypeptide is Autophagy-related protein 8h (ATG8H) (Arabidopsis thaliana (Mouse-ear cress)).